A 454-amino-acid chain; its full sequence is Sensor histidine kinase RppB (454 aa).

At 1–13 (MNTRRLFARSRLQ) the chain is on the periplasmic side. A helical transmembrane segment spans residues 14 to 34 (LAFWYALVMGGILTLLGLGVY). Residues 35-186 (RAIVQANWMA…LAAFDAENKR (152 aa)) are Cytoplasmic-facing. The chain crosses the membrane as a helical span at residues 187–207 (ILWILGLSFPIALGLVAFSSW). Topologically, residues 208 to 454 (GLAGLAMRPI…PIFSVPIVHS (247 aa)) are periplasmic. The Histidine kinase domain occupies 230-448 (NAAHELRSPL…LFTIQLPIFS (219 aa)). H233 is modified (phosphohistidine; by autocatalysis).

It is found in the cell inner membrane. The enzyme catalyses ATP + protein L-histidine = ADP + protein N-phospho-L-histidine.. Its function is as follows. Member of two-component regulatory system RppA/RppB, involved in the establishment of the appropriate stoichiometry between the 2 photosystems. It senses changes in the plastoquinone (PQ) redox poise. Another group shows this two-component pair, renamed NrsR/NrsS, controls the nickel-dependent expression of the nrsBACD operon; they suggest the photosystem-related activities seen earlier are due to the expression of NrsS (RppB) in the absence of its natural substrate NrsR (RppA). The polypeptide is Sensor histidine kinase RppB (Synechocystis sp. (strain ATCC 27184 / PCC 6803 / Kazusa)).